We begin with the raw amino-acid sequence, 520 residues long: YERLDLDVTSQTTGEEYFRFITLLRDYVSSGSFSNEIPLLRQSGGGVEAARFVLVELTNEGGDSITAAIDVTNLYVVAYQAGSQSYFLSGPGTHLFTGTTRSSLPFNGSYPDLEQYAGHRKQIPLGIDQLIQSVTALRFPGNTRTQARSILILIQMISEAARFNPILWRARQYINSGASFLPDVYMLELETSWGQQSTQVQQSTEGVFNNPIRLAIPGNFVTLTNVRDVIASLAIMLFVCGERPSSSDVRYWPLVIRPVIADDVTCSASEPTVRIVGRNGMNVDVRDDDFHDGNQIQLWPSKSNNDPNQLWTIKRDGTIRSNGSCLTTYGYTAGVYVMIFDCNTAVREATIWQIWGNGTIINPRSNLALAASSGIKGTTLTVQTLDYTLGQGWLAGNDTAPREVTIYGFNDLCMESNGGSVWVETCVSQQNDRWALYGDGSIRPEQNQDQCLTSGRDSVAGINIVSCSGGSSGQRWVFTNEGAILNLKNGLAMDVANPGLGQIIIYPATGKPNQMWLPVP.

A glycan (N-linked (GlcNAc...) asparagine) is linked at asparagine 107. Residue glutamate 159 is part of the active site. Residues cysteine 240 and cysteine 266 are joined by a disulfide bond. A propeptide spans 241-265 (connecting peptide); it reads GERPSSSDVRYWPLVIRPVIADDVT. The 128-residue stretch at 269-396 folds into the Ricin B-type lectin 1 domain; sequence SEPTVRIVGR…YTLGQGWLAG (128 aa). Residue 284–286 coordinates D-galactose; that stretch reads DVR. N-linked (GlcNAc...) asparagine glycosylation occurs at asparagine 322. Cysteine 325 and cysteine 342 are oxidised to a cystine. Asparagine 357 and asparagine 397 each carry an N-linked (GlcNAc...) asparagine glycan. The Ricin B-type lectin 2 domain maps to 400-520; the sequence is APREVTIYGF…KPNQMWLPVP (121 aa). Intrachain disulfides connect cysteine 413–cysteine 426 and cysteine 451–cysteine 467. 494–496 contacts D-galactose; the sequence is DVA.

Belongs to the ribosome-inactivating protein family. Type 2 RIP subfamily. As to quaternary structure, disulfide-linked dimer of A and B chains.

The enzyme catalyses Endohydrolysis of the N-glycosidic bond at one specific adenosine on the 28S rRNA.. Its function is as follows. The A chain is responsible for inhibiting protein synthesis through the catalytic inactivation of 60S ribosomal subunits by removing adenine from position 4,324 of 28S rRNA. The B chain binds to cell receptors and probably facilitates the entry into the cell of the A chain; B chains are also responsible for cell agglutination (lectin activity). Inhibits growth of the human tumor cell line Molt4. The chain is Beta-galactoside-specific lectin 4 from Viscum album (European mistletoe).